The following is a 374-amino-acid chain: Heat stress transcription factor A-8 (374 aa).

Residues 17 to 112 mediate DNA binding; that stretch reads VAPFLRKCYD…LLKNVIRRKN (96 aa). A hydrophobic repeat HR-A/B region spans residues 126–192; the sequence is TTYAQEKSGL…EMLSFLVMVM (67 aa). The AHA1 motif lies at 285 to 294; it reads DGAWEKLLLL. Positions 298-303 match the Nuclear localization signal motif; the sequence is RKKTKK. The short motif at 330–339 is the AHA2 element; that stretch reads KSYMLKLISE. A Nuclear export signal motif is present at residues 363–370; sequence LTEQMELL.

Belongs to the HSF family. Class A subfamily. As to quaternary structure, homotrimer. Post-translationally, exhibits temperature-dependent phosphorylation.

It localises to the cytoplasm. It is found in the nucleus. In terms of biological role, transcriptional activator that specifically binds DNA sequence 5'-AGAAnnTTCT-3' known as heat shock promoter elements (HSE). The sequence is that of Heat stress transcription factor A-8 (HSFA8) from Arabidopsis thaliana (Mouse-ear cress).